The sequence spans 147 residues: Protein phosphatase 1 regulatory subunit 14B (147 aa).

The tract at residues 1 to 55 (MADSGTAGGAALAAPAPGPGSGGPGPRVYFQSPPGAAGEGPGGADDEGPVRRQGK) is disordered. The residue at position 2 (Ala-2) is an N-acetylalanine. At Ser-21 the chain carries Phosphoserine. Residue Tyr-29 is modified to Phosphotyrosine. Ser-32 is subject to Phosphoserine. Thr-57 carries the phosphothreonine modification. A coiled-coil region spans residues 61 to 103 (DRKELRKRLNLEEWILEQLTRLYDCQEEEIPELEIDVDELLDM).

Belongs to the PP1 inhibitor family. In terms of processing, phosphorylated primarily on Thr-57 by PKC (in vitro). An unknown Ser is also phosphorylated by PKC (in vitro). Ubiquitous. Expressed at low levels.

The protein resides in the cytoplasm. Its function is as follows. Inhibitor of PPP1CA. Has over 50-fold higher inhibitory activity when phosphorylated. The chain is Protein phosphatase 1 regulatory subunit 14B (PPP1R14B) from Homo sapiens (Human).